The sequence spans 143 residues: uncharacterized protein (143 aa).

Transmembrane regions (helical) follow at residues 16–36 and 48–68; these read LIFA…IFVW and ICYI…FIYV. Asn-71 carries an N-linked (GlcNAc...) asparagine; by host glycan.

The protein localises to the membrane. This is an uncharacterized protein from Acanthamoeba polyphaga (Amoeba).